Reading from the N-terminus, the 443-residue chain is Chromosomal replication initiator protein DnaA (443 aa).

The segment at methionine 1–valine 76 is domain I, interacts with DnaA modulators. The interval valine 76–threonine 99 is domain II. The domain III, AAA+ region stretch occupies residues valine 100–glycine 320. The ATP site is built by glycine 145, glycine 147, lysine 148, and threonine 149. Positions isoleucine 321–lysine 443 are domain IV, binds dsDNA.

Belongs to the DnaA family. In terms of assembly, oligomerizes as a right-handed, spiral filament on DNA at oriC.

It localises to the cytoplasm. Its function is as follows. Plays an essential role in the initiation and regulation of chromosomal replication. ATP-DnaA binds to the origin of replication (oriC) to initiate formation of the DNA replication initiation complex once per cell cycle. Binds the DnaA box (a 9 base pair repeat at the origin) and separates the double-stranded (ds)DNA. Forms a right-handed helical filament on oriC DNA; dsDNA binds to the exterior of the filament while single-stranded (ss)DNA is stabiized in the filament's interior. The ATP-DnaA-oriC complex binds and stabilizes one strand of the AT-rich DNA unwinding element (DUE), permitting loading of DNA polymerase. After initiation quickly degrades to an ADP-DnaA complex that is not apt for DNA replication. Binds acidic phospholipids. The sequence is that of Chromosomal replication initiator protein DnaA from Mesoplasma florum (strain ATCC 33453 / NBRC 100688 / NCTC 11704 / L1) (Acholeplasma florum).